The following is a 129-amino-acid chain: M-zodatoxin-Lt8h (129 aa).

Residues 1 to 20 (MKYFVVALALVAAFACIAES) form the signal peptide. The propeptide occupies 21–60 (KPAESEHELAEVEEENELADLEDAVWLEDLADLSDLEETR).

This sequence belongs to the cationic peptide 06 (cytoinsectotoxin) family. In terms of tissue distribution, expressed by the venom gland.

Its subcellular location is the secreted. Functionally, insecticidal, cytolytic and antimicrobial peptide. Has insecticidal activity against the flesh fly S.carnaria. Has antibacterial activity against the Gram-negative bacteria E.coli. Forms voltage-dependent, ion-permeable channels in membranes. At high concentration causes cell membrane lysis. The polypeptide is M-zodatoxin-Lt8h (cit 1-11) (Lachesana tarabaevi (Spider)).